We begin with the raw amino-acid sequence, 475 residues long: Ribulose bisphosphate carboxylase large chain (475 aa).

Positions 1-2 (MS) are excised as a propeptide. Position 3 is an N-acetylproline (proline 3). At lysine 14 the chain carries N6,N6,N6-trimethyllysine. Substrate contacts are provided by asparagine 123 and threonine 173. Residue lysine 175 is the Proton acceptor of the active site. A substrate-binding site is contributed by lysine 177. Residues lysine 201, aspartate 203, and glutamate 204 each coordinate Mg(2+). N6-carboxylysine is present on lysine 201. The Proton acceptor role is filled by histidine 294. Residues arginine 295, histidine 327, and serine 379 each contribute to the substrate site.

The protein belongs to the RuBisCO large chain family. Type I subfamily. In terms of assembly, heterohexadecamer of 8 large chains and 8 small chains. Mg(2+) is required as a cofactor.

The protein resides in the plastid. It catalyses the reaction 2 (2R)-3-phosphoglycerate + 2 H(+) = D-ribulose 1,5-bisphosphate + CO2 + H2O. The catalysed reaction is D-ribulose 1,5-bisphosphate + O2 = 2-phosphoglycolate + (2R)-3-phosphoglycerate + 2 H(+). RuBisCO catalyzes two reactions: the carboxylation of D-ribulose 1,5-bisphosphate, the primary event in carbon dioxide fixation, as well as the oxidative fragmentation of the pentose substrate in the photorespiration process. Both reactions occur simultaneously and in competition at the same active site. This is Ribulose bisphosphate carboxylase large chain from Aneura mirabilis (Parasitic liverwort).